Consider the following 138-residue polypeptide: uncharacterized protein (138 aa).

3 consecutive transmembrane segments (helical) span residues 12 to 32 (LHFL…VLPI), 62 to 82 (LIAV…FSVL), and 111 to 131 (FHWV…LICS).

It is found in the cell membrane. This is an uncharacterized protein from Haemophilus influenzae (strain ATCC 51907 / DSM 11121 / KW20 / Rd).